The primary structure comprises 340 residues: MDLRFLASLTLLLGLFFVNTNPTGGQVGVCYGRNGNNLPSPAETIALFKQKNIQRVRLYSPDHDVLAALRGSNIEVTLGLPNSYLQSVASSQSQANAWVQTYVMNYANGVRFRYISVGNEVKISDSYAQFLVPAMENIDRAVLAAGLGGRIKVSTSVDMGVLRESYPPSKGSFRGDVMVVMEPIIRFLVSKNSPLLLNLYTYFSYAGNVGQIRLDYALFTAPSGIVSDPPRSYQNLFDAMLDAMYSALEKSGGASLEIVVAETGWPTGGGTDTNIENARIYNNNLIKHVKNGTPKRPGKEIETYLFAIYDENQKPTPPYVEKFWGLFYPNKQPKYDINFY.

Residues 1-25 (MDLRFLASLTLLLGLFFVNTNPTGG) form the signal peptide. The active-site Proton donor is Glu-120. The active-site Nucleophile is Glu-262.

This sequence belongs to the glycosyl hydrolase 17 family.

The protein localises to the secreted. The enzyme catalyses Hydrolysis of (1-&gt;3)-beta-D-glucosidic linkages in (1-&gt;3)-beta-D-glucans.. May play a role in plant defense against pathogens. The sequence is that of Probable glucan endo-1,3-beta-glucosidase BG1 from Arabidopsis thaliana (Mouse-ear cress).